A 738-amino-acid chain; its full sequence is Ribosomal RNA large subunit methyltransferase K/L (738 aa).

The 112-residue stretch at 46 to 157 folds into the THUMP domain; that stretch reads TAYRVCLWSR…ADQAVIGLDL (112 aa).

It belongs to the methyltransferase superfamily. RlmKL family.

It localises to the cytoplasm. It catalyses the reaction guanosine(2445) in 23S rRNA + S-adenosyl-L-methionine = N(2)-methylguanosine(2445) in 23S rRNA + S-adenosyl-L-homocysteine + H(+). The enzyme catalyses guanosine(2069) in 23S rRNA + S-adenosyl-L-methionine = N(2)-methylguanosine(2069) in 23S rRNA + S-adenosyl-L-homocysteine + H(+). In terms of biological role, specifically methylates the guanine in position 2445 (m2G2445) and the guanine in position 2069 (m7G2069) of 23S rRNA. This is Ribosomal RNA large subunit methyltransferase K/L from Methylococcus capsulatus (strain ATCC 33009 / NCIMB 11132 / Bath).